Consider the following 70-residue polypeptide: Large ribosomal subunit protein bL31 (70 aa).

Residues C16, C18, C37, and C40 each coordinate Zn(2+).

This sequence belongs to the bacterial ribosomal protein bL31 family. Type A subfamily. As to quaternary structure, part of the 50S ribosomal subunit. It depends on Zn(2+) as a cofactor.

In terms of biological role, binds the 23S rRNA. The protein is Large ribosomal subunit protein bL31 of Salmonella agona (strain SL483).